Here is an 87-residue protein sequence, read N- to C-terminus: MKTFTLIAILTCAVLVIFHAAAAEELEVQDVIQPEDTLTGLATLDEDRLFECSFSCDIKKNGKPCKGSGEKKCSGGWRCKMNFCVKV.

The first 23 residues, 1–23 (MKTFTLIAILTCAVLVIFHAAAA), serve as a signal peptide directing secretion. The propeptide occupies 24–48 (EELEVQDVIQPEDTLTGLATLDEDR).

This sequence belongs to the neurotoxin 12 (Hwtx-2) family. 03 (juruin) subfamily. Post-translationally, contains 3 disulfide bonds. Two different connectivities are observed in similar proteins (C1-C3, C2-C5, C4-C6 or C1-C4, C2-C5, C3-C6). As to expression, expressed by the venom gland.

It is found in the secreted. Its function is as follows. This toxin causes paralysis and death to sheep blowflies. It may inhibit voltage-gated calcium channels. The chain is U1-theraphotoxin-Ct1a from Coremiocnemis tropix (Australian tarantula spider).